Reading from the N-terminus, the 120-residue chain is Large ribosomal subunit protein bL19 (120 aa).

This sequence belongs to the bacterial ribosomal protein bL19 family.

Functionally, this protein is located at the 30S-50S ribosomal subunit interface and may play a role in the structure and function of the aminoacyl-tRNA binding site. The chain is Large ribosomal subunit protein bL19 from Acaryochloris marina (strain MBIC 11017).